The following is a 61-amino-acid chain: MSEKKLKITQVRSVIGSTKKQKATIKALGLGRPNYHVDKEDNPCLRGQIRVVQHLVKVEEQ.

Belongs to the universal ribosomal protein uL30 family. As to quaternary structure, part of the 50S ribosomal subunit.

The polypeptide is Large ribosomal subunit protein uL30 (Chlorobium phaeobacteroides (strain DSM 266 / SMG 266 / 2430)).